We begin with the raw amino-acid sequence, 896 residues long: Alanine--tRNA ligase (896 aa).

4 residues coordinate Zn(2+): His-574, His-578, Cys-677, and His-681.

This sequence belongs to the class-II aminoacyl-tRNA synthetase family. The cofactor is Zn(2+).

It is found in the cytoplasm. The catalysed reaction is tRNA(Ala) + L-alanine + ATP = L-alanyl-tRNA(Ala) + AMP + diphosphate. Functionally, catalyzes the attachment of alanine to tRNA(Ala) in a two-step reaction: alanine is first activated by ATP to form Ala-AMP and then transferred to the acceptor end of tRNA(Ala). Also edits incorrectly charged Ser-tRNA(Ala) and Gly-tRNA(Ala) via its editing domain. The polypeptide is Alanine--tRNA ligase (Mycoplasma mycoides subsp. mycoides SC (strain CCUG 32753 / NCTC 10114 / PG1)).